The following is a 1537-amino-acid chain: Dicer-like protein 1 (1537 aa).

Residues 38 to 68 (SDPAESSVDVQDEHSSDDSDNENEVFPKQND) form a disordered region. The 182-residue stretch at 133–314 (LFERAKTQNT…EAATRLETFL (182 aa)) folds into the Helicase ATP-binding domain. ATP is bound at residue 146–153 (LDTGSGKT). The short motif at 259–262 (DEAH) is the DEAH box element. Residues 459-618 (ELSKHFNDTT…EILPEDRILH (160 aa)) enclose the Helicase C-terminal domain. Residues 651–741 (AIAILARYAS…NSIYHRRLPA (91 aa)) form the Dicer dsRNA-binding fold domain. One can recognise a PAZ domain in the interval 891–1019 (DTVSFVHNND…ICAEPLRISA (129 aa)). RNase III domains follow at residues 1043-1202 (IALE…LSGG) and 1253-1405 (ARHV…VDSK). Positions 1294, 1391, and 1394 each coordinate Mg(2+). In terms of domain architecture, DRBM spans 1439 to 1507 (TFLHNKLTNE…SEKALAVLDG (69 aa)). Zn(2+)-binding residues include cysteine 1451, histidine 1478, cysteine 1519, and cysteine 1521.

The protein belongs to the helicase family. Dicer subfamily. It depends on Mg(2+) as a cofactor. The cofactor is Mn(2+).

In terms of biological role, dicer-like endonuclease involved in cleaving double-stranded RNA in the RNA interference (RNAi) pathway. Produces 21 to 25 bp dsRNAs (siRNAs) which target the selective destruction of homologous RNAs leading to sequence-specific suppression of gene expression, called post-transcriptional gene silencing (PTGS). Part of a broad host defense response against viral infection and transposons. The chain is Dicer-like protein 1 (dcl1) from Aspergillus fumigatus (strain ATCC MYA-4609 / CBS 101355 / FGSC A1100 / Af293) (Neosartorya fumigata).